A 179-amino-acid polypeptide reads, in one-letter code: Large ribosomal subunit protein uL5 (179 aa).

The protein belongs to the universal ribosomal protein uL5 family. Part of the 50S ribosomal subunit; part of the 5S rRNA/L5/L18/L25 subcomplex. Contacts the 5S rRNA and the P site tRNA. Forms a bridge to the 30S subunit in the 70S ribosome.

Its function is as follows. This is one of the proteins that bind and probably mediate the attachment of the 5S RNA into the large ribosomal subunit, where it forms part of the central protuberance. In the 70S ribosome it contacts protein S13 of the 30S subunit (bridge B1b), connecting the 2 subunits; this bridge is implicated in subunit movement. Contacts the P site tRNA; the 5S rRNA and some of its associated proteins might help stabilize positioning of ribosome-bound tRNAs. This Paraburkholderia phymatum (strain DSM 17167 / CIP 108236 / LMG 21445 / STM815) (Burkholderia phymatum) protein is Large ribosomal subunit protein uL5.